The chain runs to 1004 residues: Copper-transporting ATPase (1004 aa).

At 1–262 the chain is on the cytoplasmic side; the sequence is MREVILAVHG…FWKKNSIKST (262 aa). 2 HMA domains span residues 2–67 and 80–146; these read REVI…FDCE and KEGL…FDSN. Residues C13, C16, C91, and C94 each contribute to the Cu(+) site. The chain crosses the membrane as a helical span at residues 263–283; that stretch reads LLAIICMLLYMIVPMMWPTIV. The Lumenal, vesicle portion of the chain corresponds to 284–303; sequence QDRIFPYKETSFVRGLFYRD. Residues 304-324 form a helical membrane-spanning segment; the sequence is ILGVILASYIQFSVGFYFYKA. The Cytoplasmic segment spans residues 325–335; the sequence is AWASLKHGSGT. A helical membrane pass occupies residues 336–356; sequence MDTLVCVSTTCAYTFSVFSLV. Over 357–370 the chain is Lumenal, vesicle; the sequence is HNMFHPSSTGKLPR. A helical transmembrane segment spans residues 371 to 391; it reads IVFDTSIMIISYISIGKYLET. Residues 392–528 lie on the Cytoplasmic side of the membrane; it reads LAKSQTSTAL…IQGYADYLAS (137 aa). The helical transmembrane segment at 529–549 threads the bilayer; sequence IFVPGILILAVLTFFIWCFIL. The Lumenal, vesicle portion of the chain corresponds to 550-577; that stretch reads NISANPPVAFTANTKADNFFICLQTATS. The chain crosses the membrane as a helical span at residues 578–598; it reads VVIVACPCALGLATPTAIMVG. The Cytoplasmic portion of the chain corresponds to 599 to 901; sequence TGVGAQNGVL…LKTFKRIKLN (303 aa). D627 acts as the 4-aspartylphosphate intermediate in catalysis. The Mg(2+) site is built by D838 and D842. The helical transmembrane segment at 902 to 924 threads the bilayer; sequence LFWALCYNIFMIPIAMGVLIPWG. Residues 925-927 lie on the Lumenal, vesicle side of the membrane; it reads ITL. Residues 928–950 form a helical membrane-spanning segment; it reads PPMLAGLAMAFSSVSVVLSSLML. Residues 951-1004 lie on the Cytoplasmic side of the membrane; that stretch reads KKWTPPDIESHGISDFKSKFSIGNFWSRLFSTRAIAGEQDIESQAGLMSNEEVL.

The protein belongs to the cation transport ATPase (P-type) (TC 3.A.3) family. Type IB subfamily. Interacts with the copper chaperone ATX1 via the copper anion.

It is found in the golgi apparatus. It localises to the trans-Golgi network membrane. The catalysed reaction is Cu(+)(in) + ATP + H2O = Cu(+)(out) + ADP + phosphate + H(+). Copper-transporting P-type ATPase necessary for the proper uptake of iron. Required for export of copper from cytosol into extracytosolic compartment. Retrieves copper from the metallochaperone ATX1 and incorporates it into trans-Golgi vesicles where they are acquired by the cell-surface iron transporter FET3. Required the production of inositolphosphorylceramide D, probably by delivering copper to a yet to be identified enzyme. This chain is Copper-transporting ATPase, found in Saccharomyces cerevisiae (strain ATCC 204508 / S288c) (Baker's yeast).